Here is a 246-residue protein sequence, read N- to C-terminus: tRNA (guanine-N(7)-)-methyltransferase (246 aa).

S-adenosyl-L-methionine is bound by residues Glu77, Glu102, Asp129, and Asp152. Asp152 is an active-site residue. Substrate-binding positions include Lys156, Asp188, and 225–228; that span reads TKFE.

This sequence belongs to the class I-like SAM-binding methyltransferase superfamily. TrmB family.

It catalyses the reaction guanosine(46) in tRNA + S-adenosyl-L-methionine = N(7)-methylguanosine(46) in tRNA + S-adenosyl-L-homocysteine. The protein operates within tRNA modification; N(7)-methylguanine-tRNA biosynthesis. Functionally, catalyzes the formation of N(7)-methylguanine at position 46 (m7G46) in tRNA. The sequence is that of tRNA (guanine-N(7)-)-methyltransferase from Haemophilus influenzae (strain PittGG).